The following is a 313-amino-acid chain: NADH-ubiquinone oxidoreductase chain 1 (313 aa).

The next 8 membrane-spanning stretches (helical) occupy residues 5 to 25, 75 to 95, 104 to 124, 151 to 171, 175 to 195, 227 to 247, 251 to 271, and 293 to 313; these read LFMF…SVAF, FLYY…WVIF, FPYG…FMIA, LALI…LYFM, LYCW…GSSL, LIFL…SLIF, DFYS…FVWV, and PLSL…FSII.

The protein belongs to the complex I subunit 1 family.

It is found in the mitochondrion inner membrane. It catalyses the reaction a ubiquinone + NADH + 5 H(+)(in) = a ubiquinol + NAD(+) + 4 H(+)(out). Functionally, core subunit of the mitochondrial membrane respiratory chain NADH dehydrogenase (Complex I) that is believed to belong to the minimal assembly required for catalysis. Complex I functions in the transfer of electrons from NADH to the respiratory chain. The immediate electron acceptor for the enzyme is believed to be ubiquinone. The chain is NADH-ubiquinone oxidoreductase chain 1 (ND1) from Locusta migratoria (Migratory locust).